An 88-amino-acid polypeptide reads, in one-letter code: Sec-independent protein translocase protein TatA (88 aa).

A helical transmembrane segment spans residues 1 to 21; it reads MGGISIWQLLIIALIVVLLFG. A disordered region spans residues 43-88; it reads MSSEEDKKALEDAEAAKPVQTAQTVQSAQPTQQATEKKPESNKEQA. Residues 46 to 57 show a composition bias toward basic and acidic residues; the sequence is EEDKKALEDAEA. The segment covering 62-76 has biased composition (polar residues); that stretch reads QTAQTVQSAQPTQQA. Over residues 77–88 the composition is skewed to basic and acidic residues; that stretch reads TEKKPESNKEQA.

It belongs to the TatA/E family. As to quaternary structure, the Tat system comprises two distinct complexes: a TatABC complex, containing multiple copies of TatA, TatB and TatC subunits, and a separate TatA complex, containing only TatA subunits. Substrates initially bind to the TatABC complex, which probably triggers association of the separate TatA complex to form the active translocon.

The protein localises to the cell inner membrane. Functionally, part of the twin-arginine translocation (Tat) system that transports large folded proteins containing a characteristic twin-arginine motif in their signal peptide across membranes. TatA could form the protein-conducting channel of the Tat system. The protein is Sec-independent protein translocase protein TatA of Shewanella oneidensis (strain ATCC 700550 / JCM 31522 / CIP 106686 / LMG 19005 / NCIMB 14063 / MR-1).